The following is a 255-amino-acid chain: tRNA (guanine-N(1)-)-methyltransferase (255 aa).

S-adenosyl-L-methionine-binding positions include Gly113 and 133 to 138 (IGDYVL).

Belongs to the RNA methyltransferase TrmD family. Homodimer.

Its subcellular location is the cytoplasm. The enzyme catalyses guanosine(37) in tRNA + S-adenosyl-L-methionine = N(1)-methylguanosine(37) in tRNA + S-adenosyl-L-homocysteine + H(+). In terms of biological role, specifically methylates guanosine-37 in various tRNAs. The protein is tRNA (guanine-N(1)-)-methyltransferase of Shigella flexneri serotype 5b (strain 8401).